The primary structure comprises 668 residues: tRNA 5-methylaminomethyl-2-thiouridine biosynthesis bifunctional protein MnmC (668 aa).

The tract at residues 1-245 (MKHYSIQPAN…KREMLCGVME (245 aa)) is tRNA (mnm(5)s(2)U34)-methyltransferase. The interval 270–668 (IGGGIASALL…LLKGKAVKAG (399 aa)) is FAD-dependent cmnm(5)s(2)U34 oxidoreductase.

The protein in the N-terminal section; belongs to the methyltransferase superfamily. tRNA (mnm(5)s(2)U34)-methyltransferase family. In the C-terminal section; belongs to the DAO family. FAD serves as cofactor.

The protein resides in the cytoplasm. It carries out the reaction 5-aminomethyl-2-thiouridine(34) in tRNA + S-adenosyl-L-methionine = 5-methylaminomethyl-2-thiouridine(34) in tRNA + S-adenosyl-L-homocysteine + H(+). In terms of biological role, catalyzes the last two steps in the biosynthesis of 5-methylaminomethyl-2-thiouridine (mnm(5)s(2)U) at the wobble position (U34) in tRNA. Catalyzes the FAD-dependent demodification of cmnm(5)s(2)U34 to nm(5)s(2)U34, followed by the transfer of a methyl group from S-adenosyl-L-methionine to nm(5)s(2)U34, to form mnm(5)s(2)U34. The polypeptide is tRNA 5-methylaminomethyl-2-thiouridine biosynthesis bifunctional protein MnmC (Escherichia coli (strain UTI89 / UPEC)).